The primary structure comprises 244 residues: MGQKVNPKGLRVGVIKDWDSRWFADKKDFGDYLVEDHKIRELIKKESFSAGISSVSIERASNKIKVTINTAKPGMVIGRQGAGVEELKNKLEKLTGKKLIINVEEIKFQDLDAQLVAENIASQLERRISFRRAMKQTMQRSMRAGALGIKTMVSGRLGGADMARSEGYSEGTIPLQTLRAAIDYGFAEADTTYGKLGVKVWLYKGEMLPGMTEEDLPVYKNKKNDKNKKRRNNNRKGKSQAAKN.

Residues 39-107 (IRELIKKESF…KLIINVEEIK (69 aa)) enclose the KH type-2 domain. Residues 216–244 (LPVYKNKKNDKNKKRRNNNRKGKSQAAKN) form a disordered region. The span at 220–238 (KNKKNDKNKKRRNNNRKGK) shows a compositional bias: basic residues.

Belongs to the universal ribosomal protein uS3 family. In terms of assembly, part of the 30S ribosomal subunit. Forms a tight complex with proteins S10 and S14.

Its function is as follows. Binds the lower part of the 30S subunit head. Binds mRNA in the 70S ribosome, positioning it for translation. This chain is Small ribosomal subunit protein uS3, found in Finegoldia magna (strain ATCC 29328 / DSM 20472 / WAL 2508) (Peptostreptococcus magnus).